A 69-amino-acid polypeptide reads, in one-letter code: Calcium-binding protein (69 aa).

2 EF-hand domains span residues 2-37 and 38-69; these read VNRT…VNCP and FKKE…VLCS. Ca(2+)-binding residues include aspartate 15, aspartate 17, serine 19, lysine 21, glutamate 26, aspartate 51, aspartate 53, aspartate 55, glutamine 57, and glutamate 62.

The sequence is that of Calcium-binding protein from Schistosoma mansoni (Blood fluke).